The sequence spans 246 residues: Pyridoxine 5'-phosphate synthase (246 aa).

3-amino-2-oxopropyl phosphate is bound at residue N12. 14-15 (DH) contributes to the 1-deoxy-D-xylulose 5-phosphate binding site. Residue R23 coordinates 3-amino-2-oxopropyl phosphate. H48 serves as the catalytic Proton acceptor. Residues R50 and H55 each coordinate 1-deoxy-D-xylulose 5-phosphate. E75 functions as the Proton acceptor in the catalytic mechanism. A 1-deoxy-D-xylulose 5-phosphate-binding site is contributed by T105. The active-site Proton donor is H196. 3-amino-2-oxopropyl phosphate is bound by residues G197 and 218-219 (GH).

It belongs to the PNP synthase family. In terms of assembly, homooctamer; tetramer of dimers.

The protein localises to the cytoplasm. The enzyme catalyses 3-amino-2-oxopropyl phosphate + 1-deoxy-D-xylulose 5-phosphate = pyridoxine 5'-phosphate + phosphate + 2 H2O + H(+). The protein operates within cofactor biosynthesis; pyridoxine 5'-phosphate biosynthesis; pyridoxine 5'-phosphate from D-erythrose 4-phosphate: step 5/5. Its function is as follows. Catalyzes the complicated ring closure reaction between the two acyclic compounds 1-deoxy-D-xylulose-5-phosphate (DXP) and 3-amino-2-oxopropyl phosphate (1-amino-acetone-3-phosphate or AAP) to form pyridoxine 5'-phosphate (PNP) and inorganic phosphate. The chain is Pyridoxine 5'-phosphate synthase from Thioalkalivibrio sulfidiphilus (strain HL-EbGR7).